The primary structure comprises 130 residues: MENSQTGVLCPNRCQVCSHTTYIRESSGQGGRQACRFTRFVTQPRVVSEQGIQYRSWLSDRGFPATLLSTSGGLSTTIRGHGVAVTIQGDSKSLLNFCRVAYDVFHHPVVQSEVCHGSGPATSDEITTKF.

Acts as a suppressor of RNA-mediated gene silencing, also known as post-transcriptional gene silencing (PTGS), a mechanism of plant viral defense that limits the accumulation of viral RNAs. Binds to dsRNAs without size specificity. In Pothos latent virus (isolate Pigeonpea/India) (PoLV), this protein is RNA silencing suppressor p14.